The primary structure comprises 387 residues: MKFLKSNPFLALANNYMIDAPEPSNISYFWNFGSLLACVLVVQIVTGILLACFYVASMDLAFASVERIGRDVNYGFLLRALHANGASFFFIFLYLHIGRGLYYGSYRAPRTMTWNIGVIIFLLTIITAFLGYCLPANQMSFWGATVITNLLSAVPFIGDDLVQLLWGGFSVSNPTLNRFFSLHYLMPFVIAALSIMHLIALHTNGSSNPLGVTANMDRLPMNPYFLIKDLITIFIFLLAINYMVFYNPYGFMEPDCALPADPLKTPMSIVPEWYLLPYYAILRAIPNFQLGVVAMLLSILVLLLLPLLDFSAIRGNQFNPMGKFFFWCFVADFCILAWIGGSHPENVFITIGAYATAFYFIYFFILIPVYTILGNTLIDLGLPRSNK.

4 helical membrane passes run 32 to 52, 76 to 98, 113 to 133, and 179 to 199; these read FGSL…LLAC, FLLR…LHIG, TWNI…LGYC, and FFSL…MHLI. Residues histidine 82 and histidine 96 each coordinate heme b. 2 residues coordinate heme b: histidine 183 and histidine 197. Histidine 202 lines the a ubiquinone pocket. 4 consecutive transmembrane segments (helical) span residues 225–245, 289–309, 321–341, and 348–368; these read FLIK…YMVF, QLGV…PLLD, MGKF…WIGG, and FITI…ILIP.

This sequence belongs to the cytochrome b family. In terms of assembly, fungal cytochrome b-c1 complex contains 10 subunits; 3 respiratory subunits, 2 core proteins and 5 low-molecular weight proteins. Cytochrome b-c1 complex is a homodimer. It depends on heme b as a cofactor.

It is found in the mitochondrion inner membrane. In terms of biological role, component of the ubiquinol-cytochrome c reductase complex (complex III or cytochrome b-c1 complex) that is part of the mitochondrial respiratory chain. The b-c1 complex mediates electron transfer from ubiquinol to cytochrome c. Contributes to the generation of a proton gradient across the mitochondrial membrane that is then used for ATP synthesis. The polypeptide is Cytochrome b (cob) (Schizosaccharomyces octosporus (Fission yeast)).